The following is a 171-amino-acid chain: MGDPRKPRKKWEGPKHPWIKERLERERELMGRYGLRNKKELWKAETLARRFRHRARSLLGLPPEVRREASRVLVESLYRMGLIDNPNVDIDEVLGINAEKVLERRLQTIVYKKGLAKTIYQARQLVVHGHIAIAGRRVTSPGYLVSREEEKLIDYAPGSPFKERAEEAAQA.

Residues 104-168 (RRLQTIVYKK…SPFKERAEEA (65 aa)) form the S4 RNA-binding domain.

This sequence belongs to the universal ribosomal protein uS4 family. As to quaternary structure, part of the 30S ribosomal subunit. Contacts protein S5. The interaction surface between S4 and S5 is involved in control of translational fidelity.

Its function is as follows. One of the primary rRNA binding proteins, it binds directly to 16S rRNA where it nucleates assembly of the body of the 30S subunit. In terms of biological role, with S5 and S12 plays an important role in translational accuracy. In Aeropyrum pernix (strain ATCC 700893 / DSM 11879 / JCM 9820 / NBRC 100138 / K1), this protein is Small ribosomal subunit protein uS4.